The following is a 315-amino-acid chain: ATP synthase gamma chain (315 aa).

The protein belongs to the ATPase gamma chain family. As to quaternary structure, F-type ATPases have 2 components, CF(1) - the catalytic core - and CF(0) - the membrane proton channel. CF(1) has five subunits: alpha(3), beta(3), gamma(1), delta(1), epsilon(1). CF(0) has three main subunits: a, b and c.

It is found in the cellular thylakoid membrane. Functionally, produces ATP from ADP in the presence of a proton gradient across the membrane. The gamma chain is believed to be important in regulating ATPase activity and the flow of protons through the CF(0) complex. In Synechococcus sp. (strain RCC307), this protein is ATP synthase gamma chain.